The primary structure comprises 106 residues: Large ribosomal subunit protein uL24 (106 aa).

The protein belongs to the universal ribosomal protein uL24 family. As to quaternary structure, part of the 50S ribosomal subunit.

Functionally, one of two assembly initiator proteins, it binds directly to the 5'-end of the 23S rRNA, where it nucleates assembly of the 50S subunit. Its function is as follows. One of the proteins that surrounds the polypeptide exit tunnel on the outside of the subunit. The chain is Large ribosomal subunit protein uL24 from Marinobacter nauticus (strain ATCC 700491 / DSM 11845 / VT8) (Marinobacter aquaeolei).